Here is a 413-residue protein sequence, read N- to C-terminus: Patatin-like protein 3 (413 aa).

The 192-residue stretch at 54–245 (LSVDGGARPE…ALGNPTAAAI (192 aa)) folds into the PNPLA domain. Positions 58 to 61 (GGAR) match the GGXR motif. Ser100 acts as the Nucleophile in catalysis. Residues 384–413 (EHGRRKQHVPPAASGGGGGGLDCHVSKKQP) form a disordered region.

The protein belongs to the patatin family.

Its function is as follows. Possesses non-specific lipolytic acyl hydrolase (LAH) activity. Hydrolyzes phospholipids as well as galactolipids. May play a role in disease resistance. The polypeptide is Patatin-like protein 3 (PLP3) (Oryza sativa subsp. indica (Rice)).